The primary structure comprises 266 residues: Aliphatic sulfonates import ATP-binding protein SsuB (266 aa).

Residues 23-244 form the ABC transporter domain; sequence LALDAITKHY…RRGSAKLAEL (222 aa). 55–62 contributes to the ATP binding site; it reads GRSGCGKS.

The protein belongs to the ABC transporter superfamily. Aliphatic sulfonates importer (TC 3.A.1.17.2) family. The complex is composed of two ATP-binding proteins (SsuB), two transmembrane proteins (SsuC) and a solute-binding protein (SsuA).

It is found in the cell inner membrane. The enzyme catalyses ATP + H2O + aliphatic sulfonate-[sulfonate-binding protein]Side 1 = ADP + phosphate + aliphatic sulfonateSide 2 + [sulfonate-binding protein]Side 1.. In terms of biological role, part of the ABC transporter complex SsuABC involved in aliphatic sulfonates import. Responsible for energy coupling to the transport system. This chain is Aliphatic sulfonates import ATP-binding protein SsuB, found in Pectobacterium atrosepticum (strain SCRI 1043 / ATCC BAA-672) (Erwinia carotovora subsp. atroseptica).